Here is a 483-residue protein sequence, read N- to C-terminus: Glutathione reductase (483 aa).

N-acetylmethionine is present on Met-1. Leu-2 is modified (N-acetylserine). 2 residues coordinate FAD: Ser-33 and Gly-34. Ser-33 provides a ligand contact to glutathione. Residue Arg-40 participates in glutathione binding. The FAD site is built by Glu-53, Thr-60, Cys-61, and Lys-69. The cysteines at positions 61 and 66 are disulfide-linked. Tyr-123 contacts glutathione. Ala-139 lines the FAD pocket. NADP(+)-binding residues include Ala-205, Ile-208, Glu-211, Arg-228, and Arg-234. Thr-243 lines the glutathione pocket. N-linked (GlcNAc...) asparagine glycosylation is present at Asn-278. Residue Gly-294 participates in NADP(+) binding. Asp-334 is a binding site for FAD. Glu-340 lines the NADP(+) pocket. FAD is bound at residue Thr-342. Arg-350 lines the glutathione pocket. Residue Val-375 coordinates NADP(+). A glutathione-binding site is contributed by Lys-425. Residue His-472 participates in FAD binding. His-472 (proton acceptor) is an active-site residue.

It belongs to the class-I pyridine nucleotide-disulfide oxidoreductase family. As to quaternary structure, homodimer. It depends on FAD as a cofactor.

It is found in the cytoplasm. It localises to the nucleus. Its subcellular location is the mitochondrion. The protein resides in the peroxisome. The enzyme catalyses 2 glutathione + NADP(+) = glutathione disulfide + NADPH + H(+). Its function is as follows. Catalyzes the reduction of glutathione disulfide (GSSG) to reduced glutathione (GSH). Constitutes the major mechanism to maintain a high GSH:GSSG ratio in the cytosol. In Saccharomyces cerevisiae (strain ATCC 204508 / S288c) (Baker's yeast), this protein is Glutathione reductase.